Reading from the N-terminus, the 57-residue chain is UPF0391 membrane protein Smed_4051 (57 aa).

2 consecutive transmembrane segments (helical) span residues 4–24 (WALIFFVISLIAGFLGFSGIS) and 33–53 (ILFYIAVIIFLVFLVLALAVG).

Belongs to the UPF0391 family.

The protein resides in the cell membrane. In Sinorhizobium medicae (strain WSM419) (Ensifer medicae), this protein is UPF0391 membrane protein Smed_4051.